The chain runs to 430 residues: Rho GTPase-activating protein 2 (430 aa).

Residues 1-36 (MTGLVMMTKGGGCGGGGKGGRRKSTAEEEEEEEQNQ) are disordered. Residues 9 to 18 (KGGGCGGGGK) are compositionally biased toward gly residues. The CRIB domain maps to 80–93 (IGWPTNVRHITHVT). Residues 125–310 (VSAESMQCSY…TLAEREENAT (186 aa)) enclose the Rho-GAP domain. Positions 307 to 372 (ENATGSEGYS…HLSRHSTHED (66 aa)) are disordered. Over residues 316–326 (SPSHSSNSQTD) the composition is skewed to low complexity. Positions 347–356 (ECGEEEEVEE) are enriched in acidic residues. Residues 357-371 (VEQHQEHLSRHSTHE) are compositionally biased toward basic and acidic residues.

As to quaternary structure, homodimerizes via its Rho-GAP domain and forms a tetrameric complex (2:2) with ARAC1/ROP3, ARAC2/ROP7, ARAC4/ROP2, ARAC5/ROP4, ARAC7/ROP9 or ARAC11/ROP1.

In terms of biological role, acts as a GTPase activator for the Rac-type GTPase by converting it to an inactive GDP-bound state. In Arabidopsis thaliana (Mouse-ear cress), this protein is Rho GTPase-activating protein 2 (ROPGAP2).